Here is a 136-residue protein sequence, read N- to C-terminus: NLP effector protein 13 (136 aa).

Residues 1–9 (MYSWYFPKD) carry the Conserved undecapeptide motif I motif. Residues 16–22 (GHRHDWE) carry the Hepta-peptide GHRHDWE motif II motif.

This sequence belongs to the Necrosis inducing protein (NPP1) family.

It localises to the secreted. Its function is as follows. Secreted effector that contributes moderately to virulence during infection by P.capsici. Causes only small yellow areas at 3 days after inoculation of host C.annuum leaves; these areas expand somewhat and became necrotic at 7 days after inoculation. Leads only to chlorotic areas, without necrosis at 7 days after non-host N.benthamiana leaves infection. The chain is NLP effector protein 13 from Phytophthora capsici.